The sequence spans 259 residues: Adenosylcobinamide-GDP ribazoletransferase (259 aa).

6 consecutive transmembrane segments (helical) span residues 9–29, 43–63, 64–84, 118–138, 143–163, and 196–216; these read NLFFIAMGFFTRIPMPKWIEV, LVGLLVGAISAAVYSLMLYWV, SPSVAIVFAMITSVLVTGGFH, ALALVLALLLKWQLLTELALF, VSLALIVGHCLSRVVAASFIF, and VLALLLVGLVPALVLITGLVI.

The protein belongs to the CobS family. Mg(2+) is required as a cofactor.

The protein resides in the cell inner membrane. It carries out the reaction alpha-ribazole + adenosylcob(III)inamide-GDP = adenosylcob(III)alamin + GMP + H(+). It catalyses the reaction alpha-ribazole 5'-phosphate + adenosylcob(III)inamide-GDP = adenosylcob(III)alamin 5'-phosphate + GMP + H(+). Its pathway is cofactor biosynthesis; adenosylcobalamin biosynthesis; adenosylcobalamin from cob(II)yrinate a,c-diamide: step 7/7. Joins adenosylcobinamide-GDP and alpha-ribazole to generate adenosylcobalamin (Ado-cobalamin). Also synthesizes adenosylcobalamin 5'-phosphate from adenosylcobinamide-GDP and alpha-ribazole 5'-phosphate. The sequence is that of Adenosylcobinamide-GDP ribazoletransferase from Shewanella halifaxensis (strain HAW-EB4).